The chain runs to 69 residues: Sec-independent protein translocase protein TatA (69 aa).

The chain crosses the membrane as a helical span at residues 1–21 (MFGLGGQELILILLIILLLFG).

This sequence belongs to the TatA/E family. Forms a complex with TatC.

The protein resides in the cell inner membrane. In terms of biological role, part of the twin-arginine translocation (Tat) system that transports large folded proteins containing a characteristic twin-arginine motif in their signal peptide across membranes. TatA could form the protein-conducting channel of the Tat system. The protein is Sec-independent protein translocase protein TatA of Pelodictyon phaeoclathratiforme (strain DSM 5477 / BU-1).